Here is a 31-residue protein sequence, read N- to C-terminus: Photosystem II reaction center protein T (31 aa).

Residues 3-23 (ALVYTFLLIGTLGVIFFAIFF) traverse the membrane as a helical segment.

Belongs to the PsbT family. PSII is composed of 1 copy each of membrane proteins PsbA, PsbB, PsbC, PsbD, PsbE, PsbF, PsbH, PsbI, PsbJ, PsbK, PsbL, PsbM, PsbT, PsbY, PsbZ, Psb30/Ycf12, at least 3 peripheral proteins of the oxygen-evolving complex and a large number of cofactors. It forms dimeric complexes.

The protein resides in the plastid. It localises to the chloroplast thylakoid membrane. Found at the monomer-monomer interface of the photosystem II (PS II) dimer, plays a role in assembly and dimerization of PSII. PSII is a light-driven water plastoquinone oxidoreductase, using light energy to abstract electrons from H(2)O, generating a proton gradient subsequently used for ATP formation. This is Photosystem II reaction center protein T from Euglena gracilis.